Consider the following 83-residue polypeptide: MPLKETTGKVVSDKMNKTIVVAVENRISHRKYAKTMTRTKKYKAHDENNECAVGDIVTIQETRPLSRTKCWTMVNILSKSFHN.

This sequence belongs to the universal ribosomal protein uS17 family. Part of the 30S ribosomal subunit.

It is found in the plastid. The protein resides in the chloroplast. Functionally, one of the primary rRNA binding proteins, it binds specifically to the 5'-end of 16S ribosomal RNA. The polypeptide is Small ribosomal subunit protein uS17c (rps17) (Porphyra purpurea (Red seaweed)).